The chain runs to 100 residues: Nucleoid-associated protein Cagg_3200 (100 aa).

It belongs to the YbaB/EbfC family. In terms of assembly, homodimer.

The protein localises to the cytoplasm. It is found in the nucleoid. Binds to DNA and alters its conformation. May be involved in regulation of gene expression, nucleoid organization and DNA protection. The polypeptide is Nucleoid-associated protein Cagg_3200 (Chloroflexus aggregans (strain MD-66 / DSM 9485)).